A 256-amino-acid polypeptide reads, in one-letter code: Trypsinogen-like protein 3 (256 aa).

The signal sequence occupies residues 1–14 (MILLLVLALGLAGA). One can recognise a Peptidase S1 domain in the interval 15–237 (SPLGEYKECP…YNDWIHQVMA (223 aa)). Cystine bridges form between Cys-23-Cys-153, Cys-41-Cys-57, Cys-125-Cys-226, Cys-132-Cys-199, Cys-164-Cys-180, and Cys-189-Cys-213.

It belongs to the peptidase S1 family.

This Pseudopleuronectes americanus (Winter flounder) protein is Trypsinogen-like protein 3 (trp3).